Reading from the N-terminus, the 409-residue chain is LL-diaminopimelate aminotransferase (409 aa).

The substrate site is built by tyrosine 15 and glycine 42. Pyridoxal 5'-phosphate contacts are provided by residues tyrosine 72, 108 to 109 (AK), tyrosine 132, asparagine 186, tyrosine 217, and 245 to 247 (SFS). Substrate is bound by residues lysine 109, tyrosine 132, and asparagine 186. Lysine 248 is modified (N6-(pyridoxal phosphate)lysine). Pyridoxal 5'-phosphate is bound by residues arginine 256 and asparagine 291. The substrate site is built by asparagine 291 and arginine 387.

It belongs to the class-I pyridoxal-phosphate-dependent aminotransferase family. LL-diaminopimelate aminotransferase subfamily. Homodimer. Pyridoxal 5'-phosphate serves as cofactor.

The catalysed reaction is (2S,6S)-2,6-diaminopimelate + 2-oxoglutarate = (S)-2,3,4,5-tetrahydrodipicolinate + L-glutamate + H2O + H(+). It participates in amino-acid biosynthesis; L-lysine biosynthesis via DAP pathway; LL-2,6-diaminopimelate from (S)-tetrahydrodipicolinate (aminotransferase route): step 1/1. Involved in the synthesis of meso-diaminopimelate (m-DAP or DL-DAP), required for both lysine and peptidoglycan biosynthesis. Catalyzes the direct conversion of tetrahydrodipicolinate to LL-diaminopimelate. The protein is LL-diaminopimelate aminotransferase of Parabacteroides distasonis (strain ATCC 8503 / DSM 20701 / CIP 104284 / JCM 5825 / NCTC 11152).